The primary structure comprises 323 residues: tRNA U34 carboxymethyltransferase (323 aa).

Carboxy-S-adenosyl-L-methionine is bound by residues lysine 91, tryptophan 105, lysine 110, glycine 130, 152–154 (DPS), 181–182 (IE), methionine 196, tyrosine 200, and arginine 315.

The protein belongs to the class I-like SAM-binding methyltransferase superfamily. CmoB family. As to quaternary structure, homotetramer.

It catalyses the reaction carboxy-S-adenosyl-L-methionine + 5-hydroxyuridine(34) in tRNA = 5-carboxymethoxyuridine(34) in tRNA + S-adenosyl-L-homocysteine + H(+). Its function is as follows. Catalyzes carboxymethyl transfer from carboxy-S-adenosyl-L-methionine (Cx-SAM) to 5-hydroxyuridine (ho5U) to form 5-carboxymethoxyuridine (cmo5U) at position 34 in tRNAs. The polypeptide is tRNA U34 carboxymethyltransferase (Vibrio cholerae serotype O1 (strain ATCC 39541 / Classical Ogawa 395 / O395)).